The following is a 350-amino-acid chain: MSQLPTDFASLIKRFQFVSVLDSNPQTKVMSLLGTIDNKDAIITAEKTHFLFDETVRRPSQDGRSTPVLYNCENEYSCINGIQELKEITSNDIYYWGLSVIKQDMESNPTAKLNLIWPATPIHIKKYEQQNFHLVRETPEMYKRIVQPYIEEMCNNGRLKWVNNILYEGAESERVVYKDFSEENKDDGFLILPDMKWDGMNLDSLYLVAIVYRTDIKTIRDLRYSDRQWLINLNNKIRSIVPGCYNYAVHPDELRILVHYQPSYYHFHIHIVNIKHPGLGNSIAAGKAILLEDIIEMLNYLGPEGYMNKTITYAIGENHDLWKRGLEEELTKQLERDGIPKIPKIVNGFK.

At Ser-2 the chain carries N-acetylserine. A Phosphoserine modification is found at Ser-60. A Phosphothreonine modification is found at Thr-66. Residue Thr-66 is modified to Phosphothreonine; by YAK1. Tyr-70 carries the phosphotyrosine modification. Thr-120 is modified (phosphothreonine). Residues Glu-171, Lys-196, and 259-270 (HYQPSYYHFHIH) each bind substrate. A Histidine triad motif motif is present at residues 266 to 270 (HFHIH). The active-site Nucleophile is His-268.

The protein belongs to the HIT family. As to quaternary structure, homodimer. Forms heterodimer with DCS2; the interaction inhibits the DCS1 scavenger decapping activity during post-diauxic growth. Phosphorylated. Phosphorylation occurs upon glucose deprivation.

It is found in the cytoplasm. The protein resides in the perinuclear region. It localises to the P-body. It carries out the reaction a 5'-end (N(7)-methyl 5'-triphosphoguanosine)-ribonucleoside in mRNA + H2O = N(7)-methyl-GMP + a 5'-end diphospho-ribonucleoside in mRNA + 2 H(+). With respect to regulation, the hydrolytic product 7-methylguanosine diphosphate (m7GDP) efficiently inhibits the decapping scavenger activity and acts as a competitive inhibitor in vitro. Decapping scavenger enzyme that catalyzes the cleavage of a residual cap structure following the degradation of mRNAs by the 3'-&gt;5' exosome-mediated mRNA decay pathway. Hydrolyzes cap analog structures like 7-methylguanosine nucleoside triphosphate (m7GpppG) and tri-methyl guanosine nucleoside triphosphate (m3(2,2,7)GpppG) with up to 10 nucleotide substrates (small capped oligoribonucleotides) and specifically releases 5'-phosphorylated RNA fragments and 7-methylguanosine monophosphate (m7GMP) or tri-methyl guanosine nucleoside monophosphate (m3(2,2,7)GMP), respectively. Does not hydrolyze unmethylated cap analog (GpppG) and shows no decapping activity on intact m7GpppG-capped mRNA molecules longer than 25 nucleotides. Does not hydrolyze 7-methylguanosine diphosphate (m7GDP) and tri-methylguanosine diphosphate (m3(2,2,7)GDP) to (m(7)GMP) and m3(2,2,7)GMP, respectively. May also play a role in the 5'-&gt;3 mRNA decay pathway; m7GDP, the downstream product released by the 5'-&gt;3' mRNA mediated decapping activity, may be also converted by DCS1 to m7GMP. Binds to m7GpppG and strongly to m7GDP. May also regulate the 5'-&gt;3' exoribonucleolytic mRNA decay pathway in a cap-independent manner. Negatively regulates trehalase activity. This is m7GpppX diphosphatase from Saccharomyces cerevisiae (strain ATCC 204508 / S288c) (Baker's yeast).